We begin with the raw amino-acid sequence, 192 residues long: Pyridoxal 5'-phosphate synthase subunit PdxT (192 aa).

53–55 (GES) contacts L-glutamine. Catalysis depends on cysteine 85, which acts as the Nucleophile. L-glutamine-binding positions include arginine 112 and 140-141 (IR). Residues histidine 176 and glutamate 178 each act as charge relay system in the active site.

It belongs to the glutaminase PdxT/SNO family. As to quaternary structure, in the presence of PdxS, forms a dodecamer of heterodimers. Only shows activity in the heterodimer.

It catalyses the reaction aldehydo-D-ribose 5-phosphate + D-glyceraldehyde 3-phosphate + L-glutamine = pyridoxal 5'-phosphate + L-glutamate + phosphate + 3 H2O + H(+). It carries out the reaction L-glutamine + H2O = L-glutamate + NH4(+). Its pathway is cofactor biosynthesis; pyridoxal 5'-phosphate biosynthesis. Functionally, catalyzes the hydrolysis of glutamine to glutamate and ammonia as part of the biosynthesis of pyridoxal 5'-phosphate. The resulting ammonia molecule is channeled to the active site of PdxS. The sequence is that of Pyridoxal 5'-phosphate synthase subunit PdxT from Natronomonas pharaonis (strain ATCC 35678 / DSM 2160 / CIP 103997 / JCM 8858 / NBRC 14720 / NCIMB 2260 / Gabara) (Halobacterium pharaonis).